Consider the following 631-residue polypeptide: MPTTFQEIPRERPVTPLLDRADTPAGLRRLAEADLETLADELRQELLYTVGQTGGHFGAGLGVIELTIALHYVFDTPDDRLVWDVGHQAYPHKILTGRRNRMLSLRQKDGIAAFPRRSESEYDTFGVGHSSTSISAALGMAIAARLQNSARKSIAVIGDGALTAGMAFEALNHAQEVNADMLVILNDNDMSISRNVGGLSNYLAKILSSRTYASMREGSKKVLSRLPGAWEIARRTEEYAKGMLVPGTLFEELGWNYIGPIDGHDLPTMIATLRNMRDLKGPQFLHVVTKKGKGFAPAEIDPIGYHAITKLEPADKPAAPKKASGPKYSAVFGQWLCDMAAADNRLVGITPAMKEGSDLVDFSERYPERYFDVAIAEQHAVTLAAGMACEGSKPVVAIYSTFLQRAYDQLIHDVAVQNLDVLFAIDRAGLVGEDGPTHAGSYDLSYLRCIPGMLVMTPSDENELRKMLSTGHLYNGPAAVRYPRGTGPNAPISGDLQPLEIGKGVVRRQGEKVALLVFGVQLAEAMQVAEQINATVVDMRFVKPLDEALVLELAGSHELLVTIEENAIMGGAGAAVGEFLASQAVLKPLLHLGLPDIYVEHAKPAQMLAECGLDAAGIEASVKARMVKLGL.

Thiamine diphosphate contacts are provided by residues His87 and Gly128 to Ser130. Asp159 contacts Mg(2+). Residues Gly160 to Ala161, Asn188, Phe295, and Glu377 each bind thiamine diphosphate. A Mg(2+)-binding site is contributed by Asn188.

It belongs to the transketolase family. DXPS subfamily. Homodimer. Mg(2+) serves as cofactor. The cofactor is thiamine diphosphate.

It catalyses the reaction D-glyceraldehyde 3-phosphate + pyruvate + H(+) = 1-deoxy-D-xylulose 5-phosphate + CO2. It functions in the pathway metabolic intermediate biosynthesis; 1-deoxy-D-xylulose 5-phosphate biosynthesis; 1-deoxy-D-xylulose 5-phosphate from D-glyceraldehyde 3-phosphate and pyruvate: step 1/1. Its function is as follows. Catalyzes the acyloin condensation reaction between C atoms 2 and 3 of pyruvate and glyceraldehyde 3-phosphate to yield 1-deoxy-D-xylulose-5-phosphate (DXP). The chain is 1-deoxy-D-xylulose-5-phosphate synthase from Pseudomonas putida (strain ATCC 700007 / DSM 6899 / JCM 31910 / BCRC 17059 / LMG 24140 / F1).